We begin with the raw amino-acid sequence, 1139 residues long: Solute carrier family 12 member 5 (1139 aa).

Disordered regions lie at residues 1-63 (MSRR…GKEY) and 92-116 (TNLP…KPVQ). Residues 1–98 (MSRRFTVTSL…ANYTNLPQGS (98 aa)) are Cytoplasmic-facing. A compositionally biased stretch (basic and acidic residues) spans 19-45 (PDPESRRHSVADPRHLPGEDVKGDGNP). The segment covering 46-55 (KESSPFINST) has biased composition (polar residues). The residue at position 57 (Thr57) is a Phosphothreonine. Basic and acidic residues predominate over residues 98-111 (SREHEEAENNEGGK). The chain crosses the membrane as a discontinuously helical span at residues 99-120 (REHEEAENNEGGKKKPVQAPRM). Lys113 contacts K(+). Residues 121–129 (GTFMGVYLP) lie on the Extracellular side of the membrane. A helical membrane pass occupies residues 130–151 (CLQNIFGVILFLRLTWVVGIAG). The Cytoplasmic segment spans residues 152-174 (IMESFCMVFICCSCTMLTAISMS). The helical transmembrane segment at 175–203 (AIATNGVVPAGGSYYMISRSLGPEFGGAV) threads the bilayer. Ala184 is a chloride binding site. Residues 204-229 (GLCFYLGTTFAGAMYILGTIEILLAY) are Extracellular-facing. 2 consecutive transmembrane segments (helical) span residues 230 to 250 (LFPA…AAML) and 251 to 276 (NNMR…KYVN). Over 277 to 402 (KFALVFLGCV…ERSGMTSVGL (126 aa)) the chain is Extracellular. A disulfide bridge links Cys310 with Cys325. N-linked (GlcNAc...) asparagine glycosylation is found at Asn314, Asn333, Asn351, and Asn362. Cys345 and Cys354 are disulfide-bonded. A helical transmembrane segment spans residues 403-420 (ADGTPIDMDHPYVFSDMT). Residue Met410 coordinates K(+). Chloride contacts are provided by Tyr414 and Val415. Topologically, residues 421–429 (SYFTLLVGI) are cytoplasmic. Residues 430 to 453 (YFPSVTGIMAGSNRSGDLRDAQKS) traverse the membrane as a helical segment. Asp446 lines the K(+) pocket. At 454–485 (IPTGTILAIATTSAVYISSVVLFGACIEGVVL) the chain is on the extracellular side. The helical transmembrane segment at 486–513 (RDKFGEAVNGNLVVGTLAWPSPWVIVIG) threads the bilayer. Residues 514 to 534 (SFFSTCGAGLQSLTGAPRLLQ) are Cytoplasmic-facing. 2 helical membrane passes run 535–555 (AISR…KANG) and 556–578 (EPTW…ASLD). Glu569 contributes to the chloride binding site. The Cytoplasmic segment spans residues 579 to 592 (EVAPILSMFFLMCY). The next 2 helical transmembrane spans lie at 593–615 (MFVN…PRFR) and 616–632 (YYHW…CLAL). Over 633 to 1139 (MFICSWYYAL…GGREVITIYS (507 aa)) the chain is Cytoplasmic. The scissor helix stretch occupies residues 667-681 (GIRGLSLSAARYALL). Residue Thr929 is modified to Phosphothreonine; by OXSR1 and STK39. Residues 942–1052 (MHLTKNERER…GPSPVSSEGI (111 aa)) form a disordered region. Over residues 945-962 (TKNEREREIQSITDESRG) the composition is skewed to basic and acidic residues. The span at 982–994 (TAGDSEEKPEEEV) shows a compositional bias: acidic residues. Over residues 1003-1012 (PSCPSSSPSP) the composition is skewed to low complexity. Positions 1023–1042 (DPEKVHLTWTKDKSVAEKNK) are enriched in basic and acidic residues. Thr1030 is subject to Phosphothreonine; by OXSR1 and STK39. A phosphoserine mark is found at Ser1045, Ser1048, and Ser1049.

It belongs to the SLC12A transporter family. K/Cl co-transporter subfamily. In terms of assembly, homodimer; adopts a domain-swap conformation at the scissor helices connecting the transmembrane domain and C-terminal domain. Heterodimer with K-Cl cotransporters SLC12A6 and SLC12A7. Interacts with AP2A1. Phosphorylated at Thr-929 and Thr-1030 by OXSR1/OSR1 and STK39/SPAK downstream of WNK kinases (WNK1, WNK2, WNK3 or WNK4), inhibiting the potassium-chloride cotransport activity. In terms of tissue distribution, brain specific. Detected in neuronal cells.

It localises to the cell membrane. Its subcellular location is the cell projection. The protein localises to the dendrite. It carries out the reaction K(+)(in) + chloride(in) = K(+)(out) + chloride(out). With respect to regulation, inhibited following phosphorylation by OXSR1/OSR1 and STK39/SPAK: phosphorylation takes place downstream of WNK kinases (WNK1, WNK2, WNK3 or WNK4) in response to hyperosmotic stress and subsequent cell shrinkage. Mediates electroneutral potassium-chloride cotransport in mature neurons and is required for neuronal Cl(-) homeostasis. As major extruder of intracellular chloride, it establishes the low neuronal Cl(-) levels required for chloride influx after binding of GABA-A and glycine to their receptors, with subsequent hyperpolarization and neuronal inhibition. Involved in the regulation of dendritic spine formation and maturation. This chain is Solute carrier family 12 member 5, found in Homo sapiens (Human).